Consider the following 1678-residue polypeptide: Hispidin synthase (1678 aa).

The adenylation (A) domain stretch occupies residues 33–453 (GEHRWSYREL…WLGRNTDFIQ (421 aa)). Residues 586 to 661 (DELSNTVKHI…SLSNAVYAKL (76 aa)) enclose the Carrier 1 domain. The residue at position 620 (Ser-620) is an O-(pantetheine 4'-phosphoryl)serine. One can recognise a Ketosynthase family 3 (KS3) domain in the interval 683-1108 (GKEIVVVGQA…GTLGGIVLEA (426 aa)). Residues Cys-852, His-988, and His-1029 each act as for beta-ketoacyl synthase activity in the active site. A malonyl-CoA:ACP transacylase (MAT) domain region spans residues 1201-1499 (YKRGALAFAF…VAWSLLLSNG (299 aa)). The disordered stretch occupies residues 1562–1582 (EETLSSGSSTPTLENTDLDSG). The span at 1564–1576 (TLSSGSSTPTLEN) shows a compositional bias: polar residues. Residues 1597 to 1672 (DDLRDSIVSS…EMVSNLVEQA (76 aa)) enclose the Carrier 2 domain. Ser-1632 carries the post-translational modification O-(pantetheine 4'-phosphoryl)serine.

It in the N-terminal section; belongs to the NRP synthetase family.

It carries out the reaction (E)-caffeate + 2 malonyl-CoA + ATP + H(+) = hispidin + AMP + 2 CO2 + diphosphate + 2 CoA. It participates in secondary metabolite biosynthesis. Its function is as follows. PKS-NRPS hybrid synthetase; part of the gene cluster that mediates the fungal bioluminescence cycle. Performs the biosynthesis of hispidin from caffeic acid by two cycles of addition of malonyl units followed by lactonization. The fungal bioluminescence cycle begins with the hispidin synthetase that catalyzes the formation of hispidin which is further hydroxylated by the hispidin-3-hydroxylase, yielding the fungal luciferin 3-hydroxyhispidin. The luciferase then produces an endoperoxide as a high-energy intermediate with decomposition that yields oxyluciferin (also known as caffeoylpyruvate) and light emission. Oxyluciferin can be recycled to caffeic acid by caffeoylpyruvate hydrolase. The sequence is that of Hispidin synthase from Neonothopanus nambi (Agaricus nambi).